A 308-amino-acid chain; its full sequence is Putative integrase/recombinase y4qK (308 aa).

In terms of domain architecture, Core-binding (CB) spans 15-97; that stretch reads LVMTPLRQRM…ALRFFFSVTL (83 aa). The Tyr recombinase domain occupies 115–288; sequence KLPIILSPDE…ATNKVCATSS (174 aa). Catalysis depends on residues Arg150, Lys175, His240, Arg243, and His266. Tyr275 (O-(3'-phospho-DNA)-tyrosine intermediate) is an active-site residue.

Belongs to the 'phage' integrase family.

Functionally, may function as an integrase. In Sinorhizobium fredii (strain NBRC 101917 / NGR234), this protein is Putative integrase/recombinase y4qK.